A 273-amino-acid chain; its full sequence is Outer surface protein A (273 aa).

The first 16 residues, 1-16 (MKKYLLGIGLILALIA), serve as a signal peptide directing secretion. The N-palmitoyl cysteine moiety is linked to residue C17. C17 is lipidated: S-diacylglycerol cysteine.

Belongs to the OspA lipoprotein family.

The protein resides in the cell outer membrane. The protein localises to the cell surface. The sequence is that of Outer surface protein A from Borreliella burgdorferi (Lyme disease spirochete).